The following is a 259-amino-acid chain: Beta-glucanase (259 aa).

Residues Met1 to Ala31 form the signal peptide. The region spanning Arg35–Tyr255 is the GH16 domain. Glu142 (nucleophile) is an active-site residue. Residue Glu146 is the Proton donor of the active site.

This sequence belongs to the glycosyl hydrolase 16 family.

It carries out the reaction Hydrolysis of (1-&gt;4)-beta-D-glucosidic linkages in beta-D-glucans containing (1-&gt;3)- and (1-&gt;4)-bonds.. Its function is as follows. Hydrolyzes B-glucans containing mixed beta-1,3 and beta-1,4 linkages. In Brevibacillus brevis (Bacillus brevis), this protein is Beta-glucanase (bglBB).